The primary structure comprises 398 residues: tRNA-specific 2-thiouridylase MnmA (398 aa).

ATP-binding positions include 18-25 and Leu-44; that span reads AMSGGVDS. Cys-112 functions as the Nucleophile in the catalytic mechanism. Cys-112 and Cys-213 are joined by a disulfide. Gly-136 contacts ATP. The interaction with tRNA stretch occupies residues 163–165; sequence RDQ. Cys-213 (cysteine persulfide intermediate) is an active-site residue.

It belongs to the MnmA/TRMU family.

Its subcellular location is the cytoplasm. The enzyme catalyses S-sulfanyl-L-cysteinyl-[protein] + uridine(34) in tRNA + AH2 + ATP = 2-thiouridine(34) in tRNA + L-cysteinyl-[protein] + A + AMP + diphosphate + H(+). In terms of biological role, catalyzes the 2-thiolation of uridine at the wobble position (U34) of tRNA, leading to the formation of s(2)U34. The chain is tRNA-specific 2-thiouridylase MnmA from Sinorhizobium fredii (strain NBRC 101917 / NGR234).